The sequence spans 252 residues: C-type lectin domain family 2 member D3 (252 aa).

The tract at residues 1–58 (MSSSAHLQDAPPLLSGTLTQNEGQTSLRQSSSCGPSAASASESLSGYTESRIPHSKVR) is disordered. The Cytoplasmic segment spans residues 1–78 (MSSSAHLQDA…ESRVKRYCCY (78 aa)). Polar residues predominate over residues 16 to 29 (GTLTQNEGQTSLRQ). A compositionally biased stretch (low complexity) spans 30-43 (SSSCGPSAASASES). Residues 79–99 (GGVITVVAIAIVVPLSVTLSV) traverse the membrane as a helical; Signal-anchor for type II membrane protein segment. Residues 100-252 (KQMEQTSINN…KPKKYISQSQ (153 aa)) are Extracellular-facing. A C-type lectin domain is found at 137 to 242 (YGNKCFYFSE…VYVERPWICS (106 aa)). An N-linked (GlcNAc...) asparagine glycan is attached at N150. A disulfide bridge links C158 with C241.

The protein localises to the cell membrane. Its function is as follows. Lectin-type cell surface receptor. This chain is C-type lectin domain family 2 member D3 (Clec2d3), found in Rattus norvegicus (Rat).